A 128-amino-acid polypeptide reads, in one-letter code: Nanos homolog 1 (128 aa).

The interval 7-23 (FNSWSDYLGLSSLISRG) is essential for its translational repressor activity. The segment at 23 to 58 (GLQPREGGESPRPRWKASSPTPAEPLPSKAAEAHGH) is disordered. The segment at 60–114 (GCGFCRSNREAQSLYSSHRLRAPDGRVLCPVLRGYTCPLCGANGDWAHTMRYCPL) adopts a Nanos-type zinc-finger fold. Zn(2+)-binding residues include Cys61, Cys64, His77, Cys88, Cys96, Cys99, His107, and Cys112. 2 consecutive short sequence motifs (C2HC) follow at residues 61–88 (CGFC…RVLC) and 96–112 (CPLC…MRYC).

This sequence belongs to the nanos family. In terms of assembly, interacts with ccnb1.

The protein resides in the cytoplasm. Its subcellular location is the perinuclear region. In terms of biological role, acts as a translational repressor. Can mediate repression affecting different steps in the translation process: cap-driven, IRES-driven, polyadenylated RNAs or nonpolyadenylated RNAs. Essential for the development of primordial germ cells (PGCs) by ensuring their proper migration and survival. The chain is Nanos homolog 1 (nanos1) from Xenopus tropicalis (Western clawed frog).